Consider the following 550-residue polypeptide: Endonuclease/exonuclease/phosphatase family domain-containing protein 1 (550 aa).

Residues 39–68 (ERLNINTATEEELMTLPGVNRGVAQNIVEY) enclose the HhH domain. Residues 194 to 213 (STNTNGGFTHPSPTSFSVQS) are compositionally biased toward polar residues. Residues 194-216 (STNTNGGFTHPSPTSFSVQSDEP) form a disordered region.

In Danio rerio (Zebrafish), this protein is Endonuclease/exonuclease/phosphatase family domain-containing protein 1 (eepd1).